A 517-amino-acid polypeptide reads, in one-letter code: Quinol oxidase subunit 1 (517 aa).

12 helical membrane passes run 19 to 39 (VVWL…IAAM), 64 to 84 (IHGW…VIGF), 98 to 118 (QMAI…AGSP), 150 to 170 (MAYL…VTLI), 185 to 205 (IFAA…PALA), 226 to 246 (WAIL…FPLF), 271 to 291 (IYLL…TWPL), 303 to 323 (TLIL…TIFT), 333 to 353 (VGMG…QALV), 369 to 389 (VVGH…TTVF), 412 to 432 (IGMI…SVAG), and 460 to 480 (IGIP…LAYA). His-65 is a Fe(II)-heme a binding site. Residues His-235, Tyr-239, His-284, and His-285 each coordinate Cu cation. Residues 235–239 (HPVVY) constitute a cross-link (1'-histidyl-3'-tyrosine (His-Tyr)). A heme a3-binding site is contributed by His-372. His-374 is a binding site for Fe(II)-heme a.

It belongs to the heme-copper respiratory oxidase family.

The protein localises to the cell membrane. The catalysed reaction is 2 a quinol + O2 = 2 a quinone + 2 H2O. Its function is as follows. Catalyzes the reduction of oxygen to water. In terms of biological role, subunits I, II and III form the functional core of the enzyme complex. Electrons originating in caldariella quinol are transferred to the binuclear center formed by heme A3 and Cu(B). Functionally, subunit I binds heme a and the bimetallic center. The protein is Quinol oxidase subunit 1 (soxB) of Sulfolobus acidocaldarius (strain ATCC 33909 / DSM 639 / JCM 8929 / NBRC 15157 / NCIMB 11770).